The following is a 452-amino-acid chain: MTCYRGFLLGSCRRVAGGRAALRGSGSGADGRRHLGHGQPRELAGGGSPADGGFRPSRVVVVAKTTRYEFEQQRYRYAELSEEDLKQLLALKGSSYSGLLERHHIHTKNVEHIIDSLRDEGIEVRLVKRREYDEETVRWADAVIAAGGDGTMLLAASKVLDRLKPVIGVNTDPERSEGHLCLPVRYTHSFPEALRRFSRGEFRWLWRQRIRLYLEGTGINPTPVDLHEQQLSLNQHSRAFNIERAHDERSEASGPQLLPVRALNEVFIGESLSSRMPYCWAVAVDNLRRDIPNLKGLASYYEISVDDGPWEKQKSSGLNLCTGTGSKAWSFNINRVAAQAVEDVLHIARRQGNLTLPLNKDLVEKVTNEYNESLLYSPEEPKILFSIREPIANRVFSSSRQRCFSSKVCVRSRCWDACMVVDGGTSFEFNDGAIASMMINKEDELRTVILEQ.

The transit peptide at 1-50 (MTCYRGFLLGSCRRVAGGRAALRGSGSGADGRRHLGHGQPRELAGGGSPA) directs the protein to the mitochondrion. Residues 23–52 (RGSGSGADGRRHLGHGQPRELAGGGSPADG) form a disordered region. Lysine 64 is subject to N6-acetyllysine; alternate. Lysine 64 is subject to N6-succinyllysine; alternate. Serine 176 carries the post-translational modification Phosphoserine. At lysine 312 the chain carries N6-succinyllysine. Residue lysine 327 is modified to N6-acetyllysine; alternate. The residue at position 327 (lysine 327) is an N6-succinyllysine; alternate. Serine 377 bears the Phosphoserine mark. Lysine 407 is subject to N6-acetyllysine.

Belongs to the NAD kinase family. As to quaternary structure, homodimer.

It is found in the mitochondrion. It catalyses the reaction NAD(+) + ATP = ADP + NADP(+) + H(+). With respect to regulation, inhibited by NADH, NADPH and NADP(+). In terms of biological role, mitochondrial NAD(+) kinase that phosphorylates NAD(+) to yield NADP(+). Can use both ATP or inorganic polyphosphate as the phosphoryl donor. This chain is NAD kinase 2, mitochondrial (Nadk2), found in Mus musculus (Mouse).